The primary structure comprises 143 residues: Large ribosomal subunit protein uL11 (143 aa).

It belongs to the universal ribosomal protein uL11 family. As to quaternary structure, part of the ribosomal stalk of the 50S ribosomal subunit. Interacts with L10 and the large rRNA to form the base of the stalk. L10 forms an elongated spine to which L12 dimers bind in a sequential fashion forming a multimeric L10(L12)X complex. In terms of processing, one or more lysine residues are methylated.

Its function is as follows. Forms part of the ribosomal stalk which helps the ribosome interact with GTP-bound translation factors. This chain is Large ribosomal subunit protein uL11, found in Nitrosomonas europaea (strain ATCC 19718 / CIP 103999 / KCTC 2705 / NBRC 14298).